A 386-amino-acid chain; its full sequence is Zinc finger protein 385A (386 aa).

A Matrin-type 1 zinc finger spans residues 74-98; sequence ISCNVCQIRFNSQSQAEAHYKGNRH. The interval 88–193 is disordered; that stretch reads QAEAHYKGNR…ASLPGGSKEE (106 aa). Basic and acidic residues predominate over residues 103-121; it reads KGIEAAKTRGREPSVRESG. Positions 145-351 are necessary for binding to ITPR1, CEBPA and p53/TP53 mRNAs; sequence NGLGPAPGSP…AGSPLSLRPA (207 aa). Ser-185 bears the Phosphoserine mark. A Matrin-type 2 zinc finger spans residues 201–225; the sequence is LYCALCKVAVNSLSQLEAHNKGTKH. The residue at position 248 (Thr-248) is a Phosphothreonine. Residues 261–285 form a Matrin-type 3 zinc finger; sequence FHCEICNVKVNSEVQLKQHISSRRH. The segment at 279–305 is disordered; the sequence is HISSRRHRDGVAGKPNPLLSRHKKPRG.

Interacts with p53/TP53; the interaction is direct and enhances p53/TP53 transactivation functions on cell-cycle arrest target genes, resulting in growth arrest. Interacts with ELAVL1; the interaction is indirect, mRNA-dependent and may regulate p53/TP53 expression. Ubiquitinated upon prolonged exposure to genotoxic stress, which leads to proteasomal degradation of ZNF385A and releases p53/TP53 from cell-cycle arrest target gene promoters. As to expression, expressed in brain and testis (at protein level). In brain, the expression is located to olfactory bulb, cerebral cortex, hippocampus, satellite cells and Purkinje cells of the cerebellum molecular layer. Detected in bone marrow, white and brown adipose tissue, lung and at lower levels in the thymus.

It localises to the cytoplasm. Its subcellular location is the nucleus. The protein resides in the nucleolus. It is found in the cell projection. The protein localises to the dendrite. Its function is as follows. RNA-binding protein that affects the localization and the translation of a subset of mRNA. May play a role in adipogenesis through binding to the 3'-UTR of CEBPA mRNA and regulation of its translation. Targets ITPR1 mRNA to dendrites in Purkinje cells, and may regulate its activity-dependent translation. With ELAVL1, binds the 3'-UTR of p53/TP53 mRNAs to control their nuclear export induced by CDKN2A. Hence, may regulate p53/TP53 expression and mediate in part the CDKN2A anti-proliferative activity. May also bind CCNB1 mRNA. Alternatively, may also regulate p53/TP53 activity through direct protein-protein interaction. Interacts with p53/TP53 and promotes cell-cycle arrest over apoptosis enhancing preferentially the DNA binding and transactivation of p53/TP53 on cell-cycle arrest target genes over proapoptotic target genes. May also regulate the ubiquitination and stability of CDKN1A promoting DNA damage-induced cell cycle arrest. Also plays a role in megakaryocytes differentiation. The protein is Zinc finger protein 385A (Znf385a) of Mus musculus (Mouse).